The sequence spans 171 residues: MTATANTFILGAGVEWGTTFVTLVTFVILIILLKKFAWGPLKEVMDKRERDINKDIDDAEQAKINAQKLEEENRKTLKETQDEVQKILDDAKIQARKQHEEIIHEANEKANGMIETAQSEINSQKERAISDINNQVSELSVLIASKVLRKEISEQDQKELVEKYLKEAGDK.

Residues 13–33 traverse the membrane as a helical segment; that stretch reads GVEWGTTFVTLVTFVILIILL.

The protein belongs to the ATPase B chain family. As to quaternary structure, F-type ATPases have 2 components, F(1) - the catalytic core - and F(0) - the membrane proton channel. F(1) has five subunits: alpha(3), beta(3), gamma(1), delta(1), epsilon(1). F(0) has three main subunits: a(1), b(2) and c(10-14). The alpha and beta chains form an alternating ring which encloses part of the gamma chain. F(1) is attached to F(0) by a central stalk formed by the gamma and epsilon chains, while a peripheral stalk is formed by the delta and b chains.

Its subcellular location is the cell membrane. Its function is as follows. F(1)F(0) ATP synthase produces ATP from ADP in the presence of a proton or sodium gradient. F-type ATPases consist of two structural domains, F(1) containing the extramembraneous catalytic core and F(0) containing the membrane proton channel, linked together by a central stalk and a peripheral stalk. During catalysis, ATP synthesis in the catalytic domain of F(1) is coupled via a rotary mechanism of the central stalk subunits to proton translocation. Component of the F(0) channel, it forms part of the peripheral stalk, linking F(1) to F(0). This is ATP synthase subunit b from Staphylococcus epidermidis (strain ATCC 12228 / FDA PCI 1200).